The following is a 178-amino-acid chain: Large ribosomal subunit protein uL6 (178 aa).

Belongs to the universal ribosomal protein uL6 family. As to quaternary structure, part of the 50S ribosomal subunit.

Functionally, this protein binds to the 23S rRNA, and is important in its secondary structure. It is located near the subunit interface in the base of the L7/L12 stalk, and near the tRNA binding site of the peptidyltransferase center. The sequence is that of Large ribosomal subunit protein uL6 from Levilactobacillus brevis (strain ATCC 367 / BCRC 12310 / CIP 105137 / JCM 1170 / LMG 11437 / NCIMB 947 / NCTC 947) (Lactobacillus brevis).